Here is a 1142-residue protein sequence, read N- to C-terminus: Protein lin-25 (1142 aa).

The segment covering 600 to 613 has biased composition (acidic residues); the sequence is IEEEIEEEEEDIEP. The tract at residues 600–706 is disordered; that stretch reads IEEEIEEEEE…EKPKEPLEPT (107 aa). Basic and acidic residues-rich tracts occupy residues 614–627, 652–662, and 679–703; these read EVVKEMKESGTEKE, DEQKTEEKMDT, and DPPKVEEPAERINQEKPEEKPKEPL.

It localises to the nucleus. Its subcellular location is the cytoplasm. In terms of biological role, participates in the inductive signaling pathway downstream of let-60 Ras and the RAF/MAP kinase cascade to regulate specification and differentiation of many cell types. Positively regulates the fate of vulval precursor cells. Required for induction of the P12 and excretory duct cell fates. In males, it is also required for proper formation of spicules. Does not function in the signaling pathway that promotes exit from pachytene. The polypeptide is Protein lin-25 (Caenorhabditis briggsae).